The chain runs to 357 residues: DENN domain-containing protein 10 (357 aa).

The uDENN domain occupies Met1 to Asn140. The cDENN domain occupies Gln165–Gln299. One can recognise a dDENN domain in the interval Ile301–Ile357.

This sequence belongs to the DENND10 family. In terms of assembly, interacts with the coiled-coil heterodimer of CCDC22 and CCDC93; the interaction is direct. Interacts with RAB27A and RAB27B (GDP-bound forms preferentially).

It is found in the late endosome. Guanine nucleotide exchange factor (GEF) regulating homeostasis of late endocytic pathway, including endosomal positioning, maturation and secretion, possibly through activating Rab proteins such as RAB27A and RAB27B. Promotes the exchange of GDP to GTP, converting inactive GDP-bound RAB27A and RAB27B into their active GTP-bound form. This Homo sapiens (Human) protein is DENN domain-containing protein 10.